The primary structure comprises 117 residues: Appetite-regulating hormone (117 aa).

Residues 1-23 (MPSLGTMCSLLLFSVLWVDLAMA) form the signal peptide. Serine 26 is lipidated: O-decanoyl serine; alternate. Residue serine 26 is the site of O-hexanoyl serine; alternate attachment. Serine 26 carries the O-octanoyl serine; alternate lipid modification. Residues 30–68 (PEHQKLQQRKESKKPPAKLQPRALEGSLGPEDTSQVEEA) form a disordered region. The segment covering 31 to 43 (EHQKLQQRKESKK) has biased composition (basic and acidic residues). Residues 52–75 (ALEGSLGPEDTSQVEEAEDELEIR) constitute a propeptide, removed in mature form. Leucine 98 is modified (leucine amide). Residues 99–117 (GKFLQEVLWEDTNEALADE) constitute a propeptide, removed in mature form.

The protein belongs to the motilin family. In terms of processing, O-octanoylated by GOAT/MBOAT4. O-octanoylation is essential for ghrelin activity. Amidation of Leu-98 is essential for obestatin activity.

Its subcellular location is the secreted. In terms of biological role, ghrelin is the ligand for growth hormone secretagogue receptor type 1 (GHSR). Induces the release of growth hormone from the pituitary. Has an appetite-stimulating effect, induces adiposity and stimulates gastric acid secretion. Involved in growth regulation. Obestatin may be the ligand for GPR39. May have an appetite-reducing effect resulting in decreased food intake. May reduce gastric emptying activity and jejunal motility. This Canis lupus familiaris (Dog) protein is Appetite-regulating hormone (GHRL).